The following is a 574-amino-acid chain: K(+)/H(+) antiporter NhaP2 (574 aa).

The next 13 helical transmembrane spans lie at 6-26, 34-54, 58-78, 87-107, 109-129, 173-193, 196-216, 219-239, 242-262, 271-291, 299-319, 335-355, and 359-379; these read INSFFLIGALLAAVSVLLSPV, ILLIFLAVGILAGEDGPGGIL, YSTAYLVSNLALAIILLDGGM, VALWPALSLATFGVAITTSIT, VMAAWLFDLHWLQGLLVGAIV, IAILANVDAELSVSFMLISFI, FGLGIFLGLGGGWLLWKLVNL, LAEGLYSILVLSGGLMIYAAS, LGGSGILSIYLVGLFLGNKPT, VLDGMTWVSQIGMFLVLGLLL, IWLPGLALAFGMILFARPLAV, WFISWVGLRGAVPIILAVFPM, and LPGAQLYFNLAFFVVLVSLLV. Residues 405–486 enclose the RCK C-terminal domain; that stretch reads SGVEIYPSSE…LEALSNLFSQ (82 aa).

It belongs to the monovalent cation:proton antiporter 1 (CPA1) transporter (TC 2.A.36) family. NhaP2 subfamily.

The protein resides in the cell inner membrane. The enzyme catalyses K(+)(in) + H(+)(out) = K(+)(out) + H(+)(in). Its function is as follows. K(+)/H(+) antiporter that extrudes potassium in exchange for external protons and maintains the internal concentration of potassium under toxic levels. This chain is K(+)/H(+) antiporter NhaP2, found in Shewanella sp. (strain ANA-3).